Reading from the N-terminus, the 441-residue chain is Na(+)/H(+) antiporter NhaA 2 (441 aa).

A run of 12 helical transmembrane segments spans residues 34–54 (VGGAVLLVASAVALVWANSPW), 77–97 (LTLGTWAADGLLAVFFLVVGL), 115–135 (ALPMAAAVGGMVVPALIFVAV), 146–166 (GWAIPTATDIAFAVAVLAVIS), 176–196 (FLLTLAVVDDLLAVTVIAVFY), 199–219 (EINLTALGLSIVPLALFALCV), 225–245 (SWWLLLPLGVATWVLMHESGV), 249–269 (VAGVLLGFTVPVLRSVAAGGP), 290–310 (VAVPVFAFFAAGVAIGGVSGL), 317–337 (PITLGIILGLVVGKPVGIFLT), 355–375 (WIDVFGVALLAGIGFTVSLLI), and 389–409 (FVKVGVLTGSLVAALIAAVLL).

Belongs to the NhaA Na(+)/H(+) (TC 2.A.33) antiporter family.

The protein resides in the cell membrane. It carries out the reaction Na(+)(in) + 2 H(+)(out) = Na(+)(out) + 2 H(+)(in). Its function is as follows. Na(+)/H(+) antiporter that extrudes sodium in exchange for external protons. The sequence is that of Na(+)/H(+) antiporter NhaA 2 from Mycobacterium sp. (strain MCS).